We begin with the raw amino-acid sequence, 69 residues long: Conopeptide Y-Fe1 (69 aa).

The signal sequence occupies residues 1 to 20 (MSKLGVVLFVFLLLLPLAAP). Positions 21–69 (QPVGDQPADQPADRNAEARGTYLYPFSYYRLWRYFTRFLHKQPYYYVHI) are excised as a propeptide.

The protein belongs to the conotoxin M superfamily. Conopeptide Y family. In terms of tissue distribution, expressed by the venom duct.

The protein localises to the secreted. Functionally, tyrosine-rich conopeptide that specifically targets voltage-gated potassium channel Kv1.6/KCNA6 (IC(50) is 8.8 uM) that is expressed in Xenopus oocytes. In vivo, causes seizures (at 5 nmol) and death (20 nmol) when intracranially injected into mice, and causes paralysis (at 10 pmol) to C.elegans. This chain is Conopeptide Y-Fe1, found in Conus ferrugineus (Cone snail).